The following is a 151-amino-acid chain: Large ribosomal subunit protein uL13 (151 aa).

It belongs to the universal ribosomal protein uL13 family. In terms of assembly, part of the 50S ribosomal subunit.

In terms of biological role, this protein is one of the early assembly proteins of the 50S ribosomal subunit, although it is not seen to bind rRNA by itself. It is important during the early stages of 50S assembly. The chain is Large ribosomal subunit protein uL13 from Picosynechococcus sp. (strain ATCC 27264 / PCC 7002 / PR-6) (Agmenellum quadruplicatum).